Here is a 257-residue protein sequence, read N- to C-terminus: Type I iodothyronine deiodinase (257 aa).

Residues 1–12 (MGLPGLGLLLKR) are Extracellular-facing. A helical; Signal-anchor for type III membrane protein transmembrane segment spans residues 13-33 (FGVLVRVALKVAVGKVLLTLW). The Cytoplasmic portion of the chain corresponds to 34 to 257 (PSAIRPHLLA…CRSSAQSPRL (224 aa)). Sec126 is an active-site residue. Residue Sec126 is a non-standard amino acid, selenocysteine.

This sequence belongs to the iodothyronine deiodinase family. In terms of assembly, predominantly monomer. Can form homodimers but homodimerization is not essential for enzyme activity. In terms of tissue distribution, liver specific.

It is found in the cell membrane. Its subcellular location is the endoplasmic reticulum membrane. The protein localises to the basolateral cell membrane. It carries out the reaction 3,3',5-triiodo-L-thyronine + iodide + A + H(+) = L-thyroxine + AH2. It catalyses the reaction 3,3',5'-triiodo-L-thyronine + iodide + A + H(+) = L-thyroxine + AH2. The enzyme catalyses 3,3'-diiodo-L-thyronine + iodide + A + H(+) = 3,3',5'-triiodo-L-thyronine + AH2. The catalysed reaction is 3,3'-diiodo-L-thyronine + iodide + A + H(+) = 3,3',5-triiodo-L-thyronine + AH2. It carries out the reaction 3'-iodo-L-thyronine + iodide + A + H(+) = 3',5'-diiodo-L-thyronine + AH2. It catalyses the reaction 3-iodo-L-thyronine + iodide + A + H(+) = 3,5-diiodo-L-thyronine + AH2. The enzyme catalyses 3-iodo-L-thyronine + iodide + A + H(+) = 3,3'-diiodo-L-thyronine + AH2. The catalysed reaction is 3,3'-diiodothyronamine + iodide + A + H(+) = 3,3',5'-triiodothyronamine + AH2. It carries out the reaction 3'-iodothyronamine + iodide + A + H(+) = 3',5'-diiodothyronamine + AH2. It catalyses the reaction 3-iodothyronamine + iodide + A + H(+) = 3,3'-diiodothyronamine + AH2. The enzyme catalyses 3,3'-diiodothyronamine + iodide + A + H(+) = 3,3',5-triiodothyronamine + AH2. The catalysed reaction is 3-iodothyronamine + iodide + A + H(+) = 3,5-diiodothyronamine + AH2. It carries out the reaction 3,3'-diiodo-L-thyronine sulfate + iodide + A + H(+) = 3,3',5'-triiodo-L-thyronine sulfate + AH2. It catalyses the reaction 3,3',5'-triiodo-L-thyronine sulfate + iodide + A + H(+) = L-thyroxine sulfate + AH2. The enzyme catalyses 3,3'-diiodo-L-thyronine sulfate + iodide + A + H(+) = 3,3',5-triiodo-L-thyronine sulfate + AH2. Functionally, plays a crucial role in the metabolism of thyroid hormones (TH) and has specific roles in TH activation and inactivation by deiodination. Catalyzes the deiodination of L-thyroxine (T4) to 3,5,3'-triiodothyronine (T3) and 3',5'-diiodothyronine (3',5'-T2) to 3'-monoiodothyronine (3'-T1) via outer-ring deiodination (ORD). Catalyzes the deiodination of T4 to 3,3',5'-triiodothyronine (rT3), T3 to 3,3'-diiodothyronine (3,3'-T2), 3,5-diiodothyronine (3,5-T2) to 3-monoiodothyronine (3-T1) and 3,3'-T2 to 3-T1 via inner-ring deiodination (IRD). Catalyzes the deiodination of rT3 to 3,3'-T2 via ORD. Catalyzes the phenolic ring deiodinations of 3,3',5'-triiodothyronamine, 3',5'-diiodothyronamine and 3,3'-diiodothyronamine as well as tyrosyl ring deiodinations of 3,5,3'-triiodothyronamine and 3,5-diiodothyronamine. Catalyzes the deiodination of L-thyroxine sulfate and 3,3',5-triiodo-L-thyronine sulfate via IRD and of 3,3',5'-triiodo-L-thyronine sulfate via ORD. The protein is Type I iodothyronine deiodinase (DIO1) of Suncus murinus (Asian house shrew).